Reading from the N-terminus, the 256-residue chain is Spore coat polysaccharide biosynthesis protein SpsA (256 aa).

The cysteines at positions 155 and 243 are disulfide-linked. Residue D191 is part of the active site.

It belongs to the glycosyltransferase 2 family. In terms of assembly, monomer in solution.

It participates in spore coat biogenesis; spore coat polysaccharide biosynthesis. Its function is as follows. Glycosyltransferase implicated in the synthesis of the spore coat. This Bacillus subtilis (strain 168) protein is Spore coat polysaccharide biosynthesis protein SpsA (spsA).